A 142-amino-acid polypeptide reads, in one-letter code: Putative pre-16S rRNA nuclease (142 aa).

This sequence belongs to the YqgF nuclease family.

It localises to the cytoplasm. Functionally, could be a nuclease involved in processing of the 5'-end of pre-16S rRNA. The sequence is that of Putative pre-16S rRNA nuclease from Photobacterium profundum (strain SS9).